Here is a 555-residue protein sequence, read N- to C-terminus: Glucose-6-phosphate isomerase (555 aa).

Residue Glu360 is the Proton donor of the active site. Residues His391 and Lys519 contribute to the active site.

The protein belongs to the GPI family.

Its subcellular location is the cytoplasm. The enzyme catalyses alpha-D-glucose 6-phosphate = beta-D-fructose 6-phosphate. The protein operates within carbohydrate biosynthesis; gluconeogenesis. It functions in the pathway carbohydrate degradation; glycolysis; D-glyceraldehyde 3-phosphate and glycerone phosphate from D-glucose: step 2/4. In terms of biological role, catalyzes the reversible isomerization of glucose-6-phosphate to fructose-6-phosphate. This is Glucose-6-phosphate isomerase from Acinetobacter baumannii (strain AB307-0294).